We begin with the raw amino-acid sequence, 299 residues long: tRNA uridine(34) hydroxylase (299 aa).

The 95-residue stretch at 132–226 folds into the Rhodanese domain; the sequence is AGRPVVMLDT…YFEEVGGAHY (95 aa). Residue Cys186 is the Cysteine persulfide intermediate of the active site.

Belongs to the TrhO family.

The catalysed reaction is uridine(34) in tRNA + AH2 + O2 = 5-hydroxyuridine(34) in tRNA + A + H2O. In terms of biological role, catalyzes oxygen-dependent 5-hydroxyuridine (ho5U) modification at position 34 in tRNAs. This Burkholderia mallei (strain NCTC 10247) protein is tRNA uridine(34) hydroxylase.